The sequence spans 104 residues: MEVNGEEERRSRREDEEKEDYYYSLLNSPCSVCNKFVQAILKCLGLESSSIPPSSSSSSPSLVEEEDSGTETVEETGFMARITAVLRRRPRPPPYSSGRPGQNN.

Residues Met-1 to Arg-81 constitute a propeptide that is removed on maturation. Positions Ser-48–Ser-61 are enriched in low complexity. The disordered stretch occupies residues Ser-48–Asn-104. A compositionally biased stretch (acidic residues) spans Val-63–Glu-74.

Belongs to the brassicaceae elicitor peptide family.

In terms of biological role, elicitor of plant defense. The protein is Elicitor peptide 6 (PEP6) of Arabidopsis thaliana (Mouse-ear cress).